We begin with the raw amino-acid sequence, 232 residues long: Phosphatidylserine decarboxylase proenzyme (232 aa).

Catalysis depends on Ser190, which acts as the Schiff-base intermediate with substrate; via pyruvic acid. At Ser190 the chain carries Pyruvic acid (Ser); by autocatalysis.

The protein belongs to the phosphatidylserine decarboxylase family. PSD-A subfamily. Heterodimer of a large membrane-associated beta subunit and a small pyruvoyl-containing alpha subunit. Pyruvate serves as cofactor. Is synthesized initially as an inactive proenzyme. Formation of the active enzyme involves a self-maturation process in which the active site pyruvoyl group is generated from an internal serine residue via an autocatalytic post-translational modification. Two non-identical subunits are generated from the proenzyme in this reaction, and the pyruvate is formed at the N-terminus of the alpha chain, which is derived from the carboxyl end of the proenzyme. The post-translation cleavage follows an unusual pathway, termed non-hydrolytic serinolysis, in which the side chain hydroxyl group of the serine supplies its oxygen atom to form the C-terminus of the beta chain, while the remainder of the serine residue undergoes an oxidative deamination to produce ammonia and the pyruvoyl prosthetic group on the alpha chain.

Its subcellular location is the cell membrane. The catalysed reaction is a 1,2-diacyl-sn-glycero-3-phospho-L-serine + H(+) = a 1,2-diacyl-sn-glycero-3-phosphoethanolamine + CO2. The protein operates within phospholipid metabolism; phosphatidylethanolamine biosynthesis; phosphatidylethanolamine from CDP-diacylglycerol: step 2/2. In terms of biological role, catalyzes the formation of phosphatidylethanolamine (PtdEtn) from phosphatidylserine (PtdSer). The chain is Phosphatidylserine decarboxylase proenzyme from Rhodopseudomonas palustris (strain HaA2).